Consider the following 181-residue polypeptide: Malignant T-cell-amplified sequence 1-B (181 aa).

Positions 92–171 (LPHQQVDKGA…IGIENIHYLN (80 aa)) constitute a PUA domain.

The protein belongs to the MCTS1 family.

Its subcellular location is the cytoplasm. Functionally, plays a role as translation enhancer and involved in cell cycle regulation. This is Malignant T-cell-amplified sequence 1-B (mcts1-b) from Xenopus laevis (African clawed frog).